Here is a 163-residue protein sequence, read N- to C-terminus: Large ribosomal subunit protein bL17 (163 aa).

The segment at 127–163 is disordered; sequence KEVKKAKSRRGGKAKKAEGTAPEAPAAESESTTEASE. Residues 128 to 140 are compositionally biased toward basic residues; that stretch reads EVKKAKSRRGGKA. Residues 145-163 show a composition bias toward low complexity; that stretch reads GTAPEAPAAESESTTEASE.

It belongs to the bacterial ribosomal protein bL17 family. As to quaternary structure, part of the 50S ribosomal subunit. Contacts protein L32.

The sequence is that of Large ribosomal subunit protein bL17 from Flavobacterium johnsoniae (strain ATCC 17061 / DSM 2064 / JCM 8514 / BCRC 14874 / CCUG 350202 / NBRC 14942 / NCIMB 11054 / UW101) (Cytophaga johnsonae).